A 346-amino-acid polypeptide reads, in one-letter code: Aspartate-semialdehyde dehydrogenase (346 aa).

Residues 10 to 13 (TGQG) and 38 to 39 (RS) contribute to the NADP(+) site. Phosphate is bound at residue Arg-98. Cys-131 functions as the Acyl-thioester intermediate in the catalytic mechanism. Residue Gln-158 participates in substrate binding. 161-162 (SG) contacts NADP(+). Residue Lys-228 participates in phosphate binding. Arg-250 is a substrate binding site. Catalysis depends on His-257, which acts as the Proton acceptor. Asn-326 provides a ligand contact to NADP(+).

This sequence belongs to the aspartate-semialdehyde dehydrogenase family. As to quaternary structure, homodimer.

It carries out the reaction L-aspartate 4-semialdehyde + phosphate + NADP(+) = 4-phospho-L-aspartate + NADPH + H(+). Its pathway is amino-acid biosynthesis; L-lysine biosynthesis via DAP pathway; (S)-tetrahydrodipicolinate from L-aspartate: step 2/4. It participates in amino-acid biosynthesis; L-methionine biosynthesis via de novo pathway; L-homoserine from L-aspartate: step 2/3. The protein operates within amino-acid biosynthesis; L-threonine biosynthesis; L-threonine from L-aspartate: step 2/5. Its function is as follows. Catalyzes the NADPH-dependent formation of L-aspartate-semialdehyde (L-ASA) by the reductive dephosphorylation of L-aspartyl-4-phosphate. The polypeptide is Aspartate-semialdehyde dehydrogenase (Mycolicibacterium smegmatis (Mycobacterium smegmatis)).